A 118-amino-acid polypeptide reads, in one-letter code: MPIKEPDVWALIWSWLQTNLSSSSAQSAFWALFISLLRFGFMRKKPAIRYVLIDAAMCASIAGVAVPICTHLFGHTEYSSFLGTMIGFVGTEKIREFLFKFINRRIEKDDNDDFRSDI.

An N-terminal signal peptide occupies residues 1-27; sequence MPIKEPDVWALIWSWLQTNLSSSSAQS.

This is an uncharacterized protein from Haemophilus influenzae (strain ATCC 51907 / DSM 11121 / KW20 / Rd).